We begin with the raw amino-acid sequence, 493 residues long: Calcium-binding tyrosine phosphorylation-regulated protein (493 aa).

Residues 12 to 49 form the RIIa domain; it reads YGLKTLLEGISRAVLKTNPSNINQFAAAYFQELTMYRG. Disordered stretches follow at residues 85–164, 244–271, 330–354, and 426–493; these read EPGK…VSPE, DLGS…QEPP, NEQS…TTSG, and IVSD…STAE. The span at 90-100 shows a compositional bias: polar residues; that stretch reads SVESKVPTQME. Positions 101-117 are enriched in basic and acidic residues; sequence KSTDTDEDNVTRTEYSD. Positions 141–152 are enriched in low complexity; it reads SSKPATPKTTTP. Phosphothreonine is present on T151. At S155 the chain carries Phosphoserine. 2 stretches are compositionally biased toward polar residues: residues 426–442 and 461–470; these read IVSD…NSVP and SGTSVKSSSG. Residues 484–493 show a composition bias toward acidic residues; the sequence is IEPEGESTAE.

In terms of assembly, interacts with FSCB. Isoform 3 self-associates. Isoform 3 and isoform 5 interact with GSK3B. Isoform 1 does not interact with GSK3B. In terms of processing, isoform 1 is phosphorylated on tyrosine residues during in vitro capacitation. Isoform 3 and isoform 5 are phosphorylated by GSK3B in vitro. Dephosphorylation affects its ability to bind calcium. As to expression, expressed in elongating spermatids and spermatozoa (at protein level). Isoform 1 is expressed in testis. Isoform 3 and isoform 5 are also expressed in brain, pancreas and numerous brain tumors.

It is found in the cytoplasm. The protein localises to the cytoskeleton. Its subcellular location is the cell projection. The protein resides in the cilium. It localises to the flagellum. It is found in the nucleus. Its function is as follows. May function as a regulator of both motility- and head-associated functions such as capacitation and the acrosome reaction. Isoform 1 binds calcium in vitro. Isoform 2 and isoform 6 probably bind calcium. Isoform 3 and isoform 5 do not bind calcium in vitro. Isoform 4 probably does not bind calcium. This is Calcium-binding tyrosine phosphorylation-regulated protein (CABYR) from Homo sapiens (Human).